Reading from the N-terminus, the 468-residue chain is MYARNPPLNGSQSAQAPDWTPADADTGLQESMWRLGLGSDSYPERPGAPDCAYYMRTGVCGYGNRCRYNHPRDRASVEATVRATGQYPERFGEPPCQFYLKTGTCKFGASCKFHHPKNAGGSMSHVPLNIYGYPVREGDNECSYYLKTGQCKFGITCKFHHPQPAGTTVPPPPASAPQFYPSVQSLMPDQYGGPSSSLRVARTLLPGSYMQGAYGPMLLTPGVVPIPGWSPYSAPVSPALSPGAQHAVGATSLYGVTQLTSTTPSLPGVYPSLSSPTGVIQKEQAFPERPGEPECQYYLKTGDCKFGTSCKFHHPRDRVPPRANCVLSPIGLPLRPGVQRCTFYVQNGFCKFGSTCKFDHPMGTIRYNPSASSLADAPVAPYPVSSLLGALAAAPSSSSTELIAGGAKDAYMTGVPTSRSTSNISAGLIFSQSGGSIPFSELQLSSQSSLPLTGSRITRQGREIRRSF.

Positions 1 to 25 (MYARNPPLNGSQSAQAPDWTPADAD) are disordered. 5 C3H1-type zinc fingers span residues 45–73 (RPGAPDCAYYMRTGVCGYGNRCRYNHPRD), 90–118 (RFGEPPCQFYLKTGTCKFGASCKFHHPKN), 136–164 (REGDNECSYYLKTGQCKFGITCKFHHPQP), 289–317 (RPGEPECQYYLKTGDCKFGTSCKFHHPRD), and 335–363 (RPGVQRCTFYVQNGFCKFGSTCKFDHPMG).

The protein localises to the nucleus. The sequence is that of Zinc finger CCCH domain-containing protein 32 from Arabidopsis thaliana (Mouse-ear cress).